The primary structure comprises 200 residues: MAGIKLTHKLYQYYQLATSFLYAALLIRWLILMPLVGSRFLPGGIHEFLIYLMFYSSIMEVIWLLRFHGFKYGLLSRTFLKDLNFIYLVSVIHFYDDYEHALILKNASYSSFIISLSLSQAYCHWCKLFKRKGVKERTLVWKVNTFVTLPILYLSEFALLLLNIQVKNYHSTPTLDIINRVVLLAYFPVLLTAYKKLLTK.

The Lumenal portion of the chain corresponds to 1–15; the sequence is MAGIKLTHKLYQYYQ. A helical transmembrane segment spans residues 16-36; it reads LATSFLYAALLIRWLILMPLV. Residues 37 to 44 are Cytoplasmic-facing; the sequence is GSRFLPGG. The chain crosses the membrane as a helical span at residues 45-65; it reads IHEFLIYLMFYSSIMEVIWLL. Over 66–82 the chain is Lumenal; it reads RFHGFKYGLLSRTFLKD. A helical transmembrane segment spans residues 83-103; it reads LNFIYLVSVIHFYDDYEHALI. The Cytoplasmic portion of the chain corresponds to 104 to 145; it reads LKNASYSSFIISLSLSQAYCHWCKLFKRKGVKERTLVWKVNT. Residues 146–166 traverse the membrane as a helical segment; it reads FVTLPILYLSEFALLLLNIQV. Residues 167 to 173 are Lumenal-facing; the sequence is KNYHSTP. Residues 174–194 traverse the membrane as a helical segment; sequence TLDIINRVVLLAYFPVLLTAY. Residues 195-200 are Cytoplasmic-facing; it reads KKLLTK.

In terms of assembly, interacts with KRE6.

It localises to the endoplasmic reticulum membrane. Its function is as follows. Involved in the biosynthesis of (1-&gt;6)-beta-D-glucan polymers of the cell wall. Required for viability. Involved in maintaining chromosome stability. This is Beta-1,6-glucan synthesis-associated protein KEG1 (KEG1) from Saccharomyces cerevisiae (strain ATCC 204508 / S288c) (Baker's yeast).